The sequence spans 429 residues: [LysW]-aminoadipate semialdehyde transaminase (429 aa).

Residues 112–113 (GT) and F139 contribute to the pyridoxal 5'-phosphate site. Residue R142 coordinates substrate. 226–229 (DEIQ) is a pyridoxal 5'-phosphate binding site. Position 255 is an N6-(pyridoxal phosphate)lysine (K255). Substrate is bound at residue T283. T284 serves as a coordination point for pyridoxal 5'-phosphate. Residues 408–429 (LRAQQSEMGQQQVSQGESVQTE) are disordered. A compositionally biased stretch (low complexity) spans 411–429 (QQSEMGQQQVSQGESVQTE).

Belongs to the class-III pyridoxal-phosphate-dependent aminotransferase family. LysJ subfamily. As to quaternary structure, homodimer. The cofactor is pyridoxal 5'-phosphate.

It is found in the cytoplasm. It carries out the reaction [amino-group carrier protein]-C-terminal-gamma-(L-lysyl)-L-glutamate + 2-oxoglutarate = [amino-group carrier protein]-C-terminal-N-(1-carboxy-5-oxopentan-1-yl)-L-glutamine + L-glutamate. The protein operates within amino-acid biosynthesis; L-lysine biosynthesis via AAA pathway; L-lysine from L-alpha-aminoadipate (Thermus route): step 4/5. Catalyzes the transfer of the amino group of L-glutamate to [LysW]-aminoadipate 6-semialdehyde, generating [LysW]-gamma-L-lysine. The polypeptide is [LysW]-aminoadipate semialdehyde transaminase (Deinococcus radiodurans (strain ATCC 13939 / DSM 20539 / JCM 16871 / CCUG 27074 / LMG 4051 / NBRC 15346 / NCIMB 9279 / VKM B-1422 / R1)).